Reading from the N-terminus, the 176-residue chain is ATP-dependent protease subunit HslV (176 aa).

Residue T2 is part of the active site. The Na(+) site is built by G157, C160, and T163.

The protein belongs to the peptidase T1B family. HslV subfamily. A double ring-shaped homohexamer of HslV is capped on each side by a ring-shaped HslU homohexamer. The assembly of the HslU/HslV complex is dependent on binding of ATP.

The protein localises to the cytoplasm. It catalyses the reaction ATP-dependent cleavage of peptide bonds with broad specificity.. With respect to regulation, allosterically activated by HslU binding. Protease subunit of a proteasome-like degradation complex believed to be a general protein degrading machinery. The protein is ATP-dependent protease subunit HslV of Enterobacter sp. (strain 638).